The chain runs to 605 residues: Kelch-like protein 26 (605 aa).

One can recognise a BTB domain in the interval 53 to 120; it reads LDVVLAIDNE…AYSSEVTLDL (68 aa). The BACK domain occupies 155–256; sequence CLNIGQMATT…RSSELVDSVQ (102 aa). 6 Kelch repeats span residues 300–351, 352–403, 404–450, 452–498, 499–549, and 551–598; these read SLIT…VLDN, FVYV…VLDG, QLYA…TCGD, LYIS…SANN, RIYA…LLDK, and IYIV…PIIL.

May play a role in endo(sarco)plasmic reticulum (ER/SR) mitochondrial signaling. May be part of the ubiquitin-proteasome system (UPS) and affect ubiquitination and degradation of target substrates. This chain is Kelch-like protein 26 (klhl26), found in Danio rerio (Zebrafish).